We begin with the raw amino-acid sequence, 391 residues long: Galactarate dehydratase (D-threo-forming) (391 aa).

Residue R15 participates in substrate binding. Residues D42 and H45 each contribute to the Mg(2+) site. A substrate-binding site is contributed by Y89. Y90 serves as the catalytic Proton donor. Y164 serves as the catalytic Proton acceptor. Mg(2+)-binding residues include D193, E221, and H246. Residue T296 coordinates substrate. T297 is a Mg(2+) binding site. R385 provides a ligand contact to substrate.

Belongs to the mandelate racemase/muconate lactonizing enzyme family. The cofactor is Mg(2+).

The catalysed reaction is galactarate = (2S,3R)-dihydroxy-5-oxohexanedioate + H2O. In terms of biological role, catalyzes the regioselective dehydration of galactarate into 2-keto-D-threo-4,5-dihydroxyadipate ((2S,3R)-dihydroxy-5-oxohexanedioate). Is not active on other acid sugars. The sequence is that of Galactarate dehydratase (D-threo-forming) from Oceanobacillus iheyensis (strain DSM 14371 / CIP 107618 / JCM 11309 / KCTC 3954 / HTE831).